Consider the following 169-residue polypeptide: Heat shock protein beta-7 (169 aa).

The disordered stretch occupies residues methionine 1–aspartate 37. Residues methionine 1–glycine 70 form a required for localization to SC35 splicing speckles region. Residues arginine 16–alanine 32 are compositionally biased toward low complexity. The region spanning proline 61–isoleucine 169 is the sHSP domain.

The protein belongs to the small heat shock protein (HSP20) family. As to quaternary structure, interacts with C-terminal domain of actin-binding protein 280. In terms of tissue distribution, found in both cardiac and slow skeletal (soleus) muscle.

The protein localises to the cytoplasm. The protein resides in the nucleus. It localises to the cajal body. The sequence is that of Heat shock protein beta-7 (Hspb7) from Mus musculus (Mouse).